A 321-amino-acid chain; its full sequence is Porin Omp2a (321 aa).

The first 22 residues, 1–22 (MNIKSLLLGSAAALVAASGAQA), serve as a signal peptide directing secretion.

The protein belongs to the alphaproteobacteria porin family. Monomer.

It localises to the cell outer membrane. Its function is as follows. Forms passive diffusion pores that allow small molecular weight hydrophilic materials across the outer membrane. The sequence is that of Porin Omp2a (omp2a) from Brucella abortus (strain S19).